A 427-amino-acid chain; its full sequence is MAP kinase-interacting serine/threonine-protein kinase 1 (427 aa).

The span at 1–11 (MVSSQKLEKPI) shows a compositional bias: basic and acidic residues. The segment at 1-37 (MVSSQKLEKPIEMGSSEPLPIVDSDKRRKKKRKTRAT) is disordered. Phosphothreonine; by PAK2 is present on Thr-34. Ser-39 is subject to Phosphoserine; by PAK2. The Protein kinase domain maps to 49-333 (QLTSELLGEG…AAQVLQHPWV (285 aa)). ATP is bound by residues 55-63 (LGEGAYAKV) and Lys-78. The Proton acceptor role is filled by Asp-170. Ser-180 and Ser-185 each carry phosphoserine. 3 positions are modified to phosphothreonine: Thr-209, Thr-214, and Thr-344. The interval 407–427 (RALAQAGRSRDANPCLTPAGL) is disordered.

This sequence belongs to the protein kinase superfamily. CAMK Ser/Thr protein kinase family. Interacts with the C-terminal regions of EIF4G1 and EIF4G2. Also binds to dephosphorylated ERK1 and ERK2, and to the p38 kinases. Mg(2+) serves as cofactor. Post-translationally, dual phosphorylation of Thr-209 and Thr-214 activates the kinase. Phosphorylation of Thr-344 activates the kinase. MAPK3/ERK1 is one of the kinases which activate MKNK1/MNK1. Phosphorylation by PAK2 leads to a reduced phosphorylation of EIF4G1. In terms of tissue distribution, ubiquitously expressed in all tissues examined, with high levels in skeletal muscle.

The enzyme catalyses L-seryl-[protein] + ATP = O-phospho-L-seryl-[protein] + ADP + H(+). It carries out the reaction L-threonyl-[protein] + ATP = O-phospho-L-threonyl-[protein] + ADP + H(+). Its activity is regulated as follows. Phosphorylated and activated by the p38 kinases and kinases in the Erk pathway. Its function is as follows. May play a role in the response to environmental stress and cytokines. Appears to regulate translation by phosphorylating EIF4E, thus increasing the affinity of this protein for the 7-methylguanosine-containing mRNA cap. In Mus musculus (Mouse), this protein is MAP kinase-interacting serine/threonine-protein kinase 1 (Mknk1).